The chain runs to 677 residues: DNA ligase (677 aa).

NAD(+) is bound by residues 32–36 (DSEYD), 81–82 (SL), and Glu-112. Lys-114 acts as the N6-AMP-lysine intermediate in catalysis. The NAD(+) site is built by Arg-135, Glu-171, Lys-288, and Lys-312. Residues Cys-416, Cys-419, Cys-434, and Cys-439 each contribute to the Zn(2+) site. A BRCT domain is found at 598–677 (YKPLPLSGVE…QEFINMLEQS (80 aa)).

This sequence belongs to the NAD-dependent DNA ligase family. LigA subfamily. Mg(2+) is required as a cofactor. Mn(2+) serves as cofactor.

It carries out the reaction NAD(+) + (deoxyribonucleotide)n-3'-hydroxyl + 5'-phospho-(deoxyribonucleotide)m = (deoxyribonucleotide)n+m + AMP + beta-nicotinamide D-nucleotide.. Its function is as follows. DNA ligase that catalyzes the formation of phosphodiester linkages between 5'-phosphoryl and 3'-hydroxyl groups in double-stranded DNA using NAD as a coenzyme and as the energy source for the reaction. It is essential for DNA replication and repair of damaged DNA. The chain is DNA ligase from Dehalococcoides mccartyi (strain ATCC BAA-2266 / KCTC 15142 / 195) (Dehalococcoides ethenogenes (strain 195)).